Here is a 122-residue protein sequence, read N- to C-terminus: Small ribosomal subunit protein uS13 (122 aa).

The tract at residues 99 to 122 is disordered; that stretch reads RGQRTHTNARTRKGPAKAIAGKKK.

Belongs to the universal ribosomal protein uS13 family. In terms of assembly, part of the 30S ribosomal subunit. Forms a loose heterodimer with protein S19. Forms two bridges to the 50S subunit in the 70S ribosome.

Functionally, located at the top of the head of the 30S subunit, it contacts several helices of the 16S rRNA. In the 70S ribosome it contacts the 23S rRNA (bridge B1a) and protein L5 of the 50S subunit (bridge B1b), connecting the 2 subunits; these bridges are implicated in subunit movement. Contacts the tRNAs in the A and P-sites. The polypeptide is Small ribosomal subunit protein uS13 (Rhizobium etli (strain ATCC 51251 / DSM 11541 / JCM 21823 / NBRC 15573 / CFN 42)).